Consider the following 88-residue polypeptide: Small ribosomal subunit protein uS15 (88 aa).

The protein belongs to the universal ribosomal protein uS15 family. As to quaternary structure, part of the 30S ribosomal subunit. Forms a bridge to the 50S subunit in the 70S ribosome, contacting the 23S rRNA.

Functionally, one of the primary rRNA binding proteins, it binds directly to 16S rRNA where it helps nucleate assembly of the platform of the 30S subunit by binding and bridging several RNA helices of the 16S rRNA. In terms of biological role, forms an intersubunit bridge (bridge B4) with the 23S rRNA of the 50S subunit in the ribosome. This chain is Small ribosomal subunit protein uS15, found in Syntrophus aciditrophicus (strain SB).